A 453-amino-acid chain; its full sequence is UDP-N-acetylmuramoylalanine--D-glutamate ligase (453 aa).

Residue 115–121 (GTNGKTT) coordinates ATP.

It belongs to the MurCDEF family.

Its subcellular location is the cytoplasm. It carries out the reaction UDP-N-acetyl-alpha-D-muramoyl-L-alanine + D-glutamate + ATP = UDP-N-acetyl-alpha-D-muramoyl-L-alanyl-D-glutamate + ADP + phosphate + H(+). It functions in the pathway cell wall biogenesis; peptidoglycan biosynthesis. Its function is as follows. Cell wall formation. Catalyzes the addition of glutamate to the nucleotide precursor UDP-N-acetylmuramoyl-L-alanine (UMA). In Geotalea uraniireducens (strain Rf4) (Geobacter uraniireducens), this protein is UDP-N-acetylmuramoylalanine--D-glutamate ligase.